We begin with the raw amino-acid sequence, 194 residues long: Adenylate kinase isoenzyme 1 (194 aa).

Methionine 1 is modified (N-acetylmethionine). 18–23 provides a ligand contact to ATP; sequence GSGKGT. Serine 38 is subject to Phosphoserine. The interval 38–67 is NMP; it reads STGDLLRAEVSSGSARGKMLSEIMEKGQLV. Residues threonine 39, arginine 44, 65 to 67, 94 to 97, and glutamine 101 each bind AMP; these read QLV and GYPR. Positions 131–141 are LID; the sequence is KRGETSGRVDD. Residue arginine 132 participates in ATP binding. AMP is bound by residues arginine 138 and arginine 149. Glycine 177 contacts ATP.

It belongs to the adenylate kinase family. AK1 subfamily. As to quaternary structure, monomer. The cofactor is Mg(2+).

Its subcellular location is the cytoplasm. The enzyme catalyses a ribonucleoside 5'-phosphate + ATP = a ribonucleoside 5'-diphosphate + ADP. It carries out the reaction AMP + ATP = 2 ADP. The catalysed reaction is dAMP + ATP = dADP + ADP. It catalyses the reaction dATP + AMP = dADP + ADP. The enzyme catalyses dAMP + dATP = 2 dADP. It carries out the reaction a 2'-deoxyribonucleoside 5'-diphosphate + ATP = a 2'-deoxyribonucleoside 5'-triphosphate + ADP. The catalysed reaction is a ribonucleoside 5'-diphosphate + ATP = a ribonucleoside 5'-triphosphate + ADP. It catalyses the reaction CDP + GTP = CTP + GDP. The enzyme catalyses GDP + ATP = GTP + ADP. It carries out the reaction UDP + ATP = UTP + ADP. The catalysed reaction is GTP + UDP = UTP + GDP. It catalyses the reaction dTDP + GTP = dTTP + GDP. The enzyme catalyses dCDP + GTP = dCTP + GDP. It carries out the reaction dGDP + ATP = dGTP + ADP. The catalysed reaction is dADP + GTP = dATP + GDP. It catalyses the reaction thiamine diphosphate + ADP = thiamine triphosphate + AMP. Its function is as follows. Catalyzes the reversible transfer of the terminal phosphate group between ATP and AMP. Also displays broad nucleoside diphosphate kinase activity. Plays an important role in cellular energy homeostasis and in adenine nucleotide metabolism. Also catalyzes at a very low rate the synthesis of thiamine triphosphate (ThTP) from thiamine diphosphate (ThDP) and ADP. In Sus scrofa (Pig), this protein is Adenylate kinase isoenzyme 1.